The following is a 179-amino-acid chain: uncharacterized protein (179 aa).

The helical transmembrane segment at 5 to 25 (MLAGIGIGVAAALGVAAVASL) threads the bilayer.

This sequence to Rickettsia 17 kDa surface antigen.

It localises to the membrane. This is an uncharacterized protein from Escherichia coli O6:H1 (strain CFT073 / ATCC 700928 / UPEC).